The sequence spans 274 residues: Thiamine kinase (274 aa).

This sequence belongs to the thiamine kinase family.

It catalyses the reaction thiamine + ATP = thiamine phosphate + ADP + H(+). It functions in the pathway cofactor biosynthesis; thiamine diphosphate biosynthesis; thiamine phosphate from thiamine: step 1/1. Its function is as follows. Catalyzes the ATP-dependent phosphorylation of thiamine to thiamine phosphate. Is involved in thiamine salvage. The sequence is that of Thiamine kinase from Escherichia coli (strain SMS-3-5 / SECEC).